The chain runs to 366 residues: MVEYTNTFKVAAVQAQPVWFDAAKTVDKTVSIIAEAARNGCELVAFPEVFIPGYPYHIWVDSPLAGMAKFAVRYHENSLTMDSPHVQRLLDAARDHNIAVVVGISERDGGSLYMTQLVIDADGQLVARRRKLKPTHVERSVYGEGNGSDISVYDMPFARLGALNCWEHFQTLTKYAMYSMHEQVHVASWPGMSLYQPEVPAFGVDAQLTATRMYALEGQTFVVCTTQVVTPEAHEFFCDNDEQRKLIGRGGGFARIIGPDGRDLATPLAEDEEGILYADIDLSAITLAKQAADPVGHYSRPDVLSLNFNQRHTTPVNTAISTIHATHTLVPQSGALDGVRELNGADEQRALPSTHSDETDRATASI.

A CN hydrolase domain is found at 8-282 (FKVAAVQAQP…EGILYADIDL (275 aa)). The active-site Proton acceptor is glutamate 48. Lysine 131 acts as the Proton donor in catalysis. Cysteine 165 functions as the Nucleophile in the catalytic mechanism. The segment at 346 to 366 (DEQRALPSTHSDETDRATASI) is disordered. A compositionally biased stretch (basic and acidic residues) spans 355–366 (HSDETDRATASI).

It belongs to the carbon-nitrogen hydrolase superfamily. Nitrilase family. As to quaternary structure, homodimer.

It catalyses the reaction an aliphatic nitrile + 2 H2O = a carboxylate + NH4(+). The chain is Aliphatic nitrilase (nitA) from Rhodococcus rhodochrous.